The following is a 660-amino-acid chain: Polyadenylate-binding protein 3 (660 aa).

RRM domains are found at residues 49–126, 136–213, 229–306, and 332–409; these read SSLY…LSNR, GNIF…HFIR, TNVY…RAQK, and ANLY…LAQR. A PABC domain is found at 571-648; the sequence is PISKLTSSLA…ALDVLRLSVD (78 aa).

This sequence belongs to the polyadenylate-binding protein type-1 family. Expressed predominantly in immature flowers. Detected in tapetum and pollen. Strongly expressed in immatures siliques.

It localises to the cytoplasm. It is found in the nucleus. Functionally, binds the poly(A) tail of mRNA. Appears to be an important mediator of the multiple roles of the poly(A) tail in mRNA biogenesis, stability and translation. In the cytoplasm, affects both translation and mRNA decay. Inhibits the polyadenylated RNA degradation by the Rrp41p 3'--&gt;5' exonuclease in vitro. Binds with the 5'UTRs of PAB2, PAB3 and with a lower affinity with the 5'UTR of PAB5. In Arabidopsis thaliana (Mouse-ear cress), this protein is Polyadenylate-binding protein 3 (PAB3).